The primary structure comprises 216 residues: MESQEPTESSQNGKQYIISEELISEGKWVKLEKTTYMDPTGKTRTWESVKRTTRKEQTADGVAVIPVLQRTLHYECIVLVKQFRPPMGGYCIEFPAGLIDDGETPEAAALRELEEETGYKGDVAECSPAVCMDPGLSNCTVHIVTVTINGDDAENARPKPKPEFVEVISLPKNDLLQRLDALVAEEHLTVDARVYSYALALKHANAKPFEVPFLKF.

An N-acetylmethionine modification is found at Met1. Ser3 and Ser10 each carry phosphoserine. Substrate is bound at residue Trp28. A Glycyl lysine isopeptide (Lys-Gly) (interchain with G-Cter in SUMO2) cross-link involves residue Lys42. Position 45 is a phosphothreonine (Thr45). Substrate is bound by residues Trp46–Glu47 and Arg51. The region spanning Gln57–Val194 is the Nudix hydrolase domain. Tyr74 carries the phosphotyrosine modification. Arg84 serves as a coordination point for substrate. Residue Ala96 participates in Mg(2+) binding. The Nudix box signature appears at Gly97–Gly118. Leu98 is a binding site for substrate. Mg(2+) contacts are provided by Glu112 and Glu116. Asp133 is a binding site for substrate. Glu163 is a Mg(2+) binding site. Residues Lys207 and Lys215 each carry the N6-acetyllysine modification.

This sequence belongs to the Nudix hydrolase family. Homodimer. Interacts with PARG. Mg(2+) serves as cofactor. Post-translationally, phosphorylation at Thr-45 is required for homodimer stability; dephosphorylation results in destabilization of the homodimer. Dephosphorylation at Thr-45 promotes the ATP-synthesis activity.

The protein resides in the nucleus. It catalyses the reaction D-ribose 5-phosphate + ATP + H(+) = ADP-D-ribose + diphosphate. The catalysed reaction is ADP-D-ribose + H2O = D-ribose 5-phosphate + AMP + 2 H(+). It carries out the reaction 8-oxo-dGDP + H2O = 8-oxo-dGMP + phosphate + H(+). In terms of biological role, enzyme that can either act as an ADP-sugar pyrophosphatase in absence of diphosphate or catalyze the synthesis of ATP in presence of diphosphate. In absence of diphosphate, hydrolyzes with similar activities various modified nucleoside diphosphates such as ADP-ribose, ADP-mannose, ADP-glucose, 8-oxo-GDP and 8-oxo-dGDP. Can also hydrolyze other nucleotide sugars with low activity. In presence of diphosphate, mediates the synthesis of ATP in the nucleus by catalyzing the conversion of ADP-ribose to ATP and ribose 5-phosphate. Nuclear ATP synthesis takes place when dephosphorylated at Thr-45. Nuclear ATP generation is required for extensive chromatin remodeling events that are energy-consuming. Does not play a role in U8 snoRNA decapping activity. Binds U8 snoRNA. In Pongo abelii (Sumatran orangutan), this protein is ADP-sugar pyrophosphatase.